A 767-amino-acid chain; its full sequence is Probable beta-glucosidase K (767 aa).

Asn-19 is a glycosylation site (N-linked (GlcNAc...) asparagine). The active site involves Asp-232. N-linked (GlcNAc...) asparagine glycosylation is found at Asn-324, Asn-477, and Asn-749. One can recognise a PA14 domain in the interval 405–552 (EGQPGLRMRF…DPERAIARAV (148 aa)). The interval 727-767 (LGRRGRSGSSPAVYRGRSNNVVNRTSHQGAQRISKGGFAAR) is disordered. Residues 743 to 757 (RSNNVVNRTSHQGAQ) show a composition bias toward polar residues.

This sequence belongs to the glycosyl hydrolase 3 family.

The protein resides in the secreted. It carries out the reaction Hydrolysis of terminal, non-reducing beta-D-glucosyl residues with release of beta-D-glucose.. It functions in the pathway glycan metabolism; cellulose degradation. Functionally, beta-glucosidases are one of a number of cellulolytic enzymes involved in the degradation of cellulosic biomass. Catalyzes the last step releasing glucose from the inhibitory cellobiose. In Aspergillus fumigatus (strain ATCC MYA-4609 / CBS 101355 / FGSC A1100 / Af293) (Neosartorya fumigata), this protein is Probable beta-glucosidase K (bglK).